The following is a 615-amino-acid chain: MFSVRDLCLVLSLVGAIKTEDGSDPPSGDFLTEGGGVRGPRLVERQQSACKETGWPFCSDEDWNTKCPSGCRMKGLIDEVDQDFTSRINKLRDSLFNYQKNSKDSNTLTKNIVELMRGDFAKANNNDNTFKQISEDLRSRIEILRRKVIEQVQRIKVLQKNVRDQLVDMKRLEVDIDIKIRSCKGSCSRALEHKVDLEDYKNQQKQLEQVIAINLLPSRDIQYLPLIKMSTITGPVPREFKSQLQEAPLEWKALLEMQQTKMVLETFGGDGHARGDSVSQGTGLAPGSPRKPGTSSIGNVNPGSYGPGSSGTWNPGRPEPGSAGTWNPGRPEPGSAGTWNPGRPEPGSAGTWNPGRPEPGSAGTWNPGRPEPGSAGTWNTGSSGSSSFRPDSSGHGNIRPSSPDWGTFREEGSVSSGTKQEFHTGKLVTTKGDKELLIDNEKVTSGHTTTTRRSCSKVITKTVTNADGRTETTKEVVKSEDGSDCGDADFDWHHTFPSRGNLDDFFHRDKDDFFTRSSHEFDGRTGLAPEFAALGESGSSSSKTSTHSKQFVSSSTTVNRGGSAIESKHFKMEDEAESLEDLGFKGAHGTQKGHTKARPARGIHTSPLGEPSLTP.

Residues Met-1–Thr-19 form the signal peptide. Positions Cys-71–Gly-602 form a coiled coil. The tract at residues Phe-267–Leu-427 is disordered. Polar residues predominate over residues Gly-293–Pro-302. O-linked (GalNAc...) threonine glycosylation is present at Thr-325. Over residues Gly-373–Gly-396 the composition is skewed to low complexity. A disulfide bridge connects residues Cys-455 and Cys-485. The disordered stretch occupies residues Glu-530 to Pro-615. Over residues Ser-537–Lys-549 the composition is skewed to low complexity. Polar residues predominate over residues Gln-550–Arg-560. Positions Gln-591–Arg-601 are enriched in basic residues.

Heterohexamer; disulfide linked. Contains 2 sets of 3 non-identical chains (alpha, beta and gamma). The 2 heterotrimers are in head to head conformation with the N-termini in a small central domain. Conversion of fibrinogen to fibrin is triggered by thrombin, which cleaves fibrinopeptides A and B from alpha and beta chains, and thus exposes the N-terminal polymerization sites responsible for the formation of the soft clot. The soft clot is converted into the hard clot by factor XIIIA which catalyzes the epsilon-(gamma-glutamyl)lysine cross-linking between gamma chains (stronger) and between alpha chains (weaker) of different monomers. In terms of processing, forms F13A-mediated cross-links between a glutamine and the epsilon-amino group of a lysine residue, forming fibronectin-fibrinogen heteropolymers.

Its subcellular location is the secreted. Its function is as follows. Cleaved by the protease thrombin to yield monomers which, together with fibrinogen beta (FGB) and fibrinogen gamma (FGG), polymerize to form an insoluble fibrin matrix. Fibrin has a major function in hemostasis as one of the primary components of blood clots. In addition, functions during the early stages of wound repair to stabilize the lesion and guide cell migration during re-epithelialization. Was originally thought to be essential for platelet aggregation, based on in vitro studies using anticoagulated blood. However, subsequent studies have shown that it is not absolutely required for thrombus formation in vivo. Enhances expression of SELP in activated platelets via an ITGB3-dependent pathway. Maternal fibrinogen is essential for successful pregnancy. Fibrin deposition is also associated with infection, where it protects against IFNG-mediated hemorrhage. May also facilitate the immune response via both innate and T-cell mediated pathways. The sequence is that of Fibrinogen alpha chain (FGA) from Bos taurus (Bovine).